The following is a 125-amino-acid chain: Holo-[acyl-carrier-protein] synthase (125 aa).

Asp8 and Glu57 together coordinate Mg(2+).

Belongs to the P-Pant transferase superfamily. AcpS family. Mg(2+) is required as a cofactor.

Its subcellular location is the cytoplasm. The catalysed reaction is apo-[ACP] + CoA = holo-[ACP] + adenosine 3',5'-bisphosphate + H(+). In terms of biological role, transfers the 4'-phosphopantetheine moiety from coenzyme A to a Ser of acyl-carrier-protein. This Blochmanniella pennsylvanica (strain BPEN) protein is Holo-[acyl-carrier-protein] synthase.